The following is a 376-amino-acid chain: dTDP-4-amino-4,6-dideoxygalactose transaminase (376 aa).

Lys181 carries the N6-(pyridoxal phosphate)lysine modification.

It belongs to the DegT/DnrJ/EryC1 family. Homotetramer. The cofactor is pyridoxal 5'-phosphate.

The catalysed reaction is dTDP-4-amino-4,6-dideoxy-alpha-D-galactose + 2-oxoglutarate = dTDP-4-dehydro-6-deoxy-alpha-D-glucose + L-glutamate. It participates in bacterial outer membrane biogenesis; enterobacterial common antigen biosynthesis. Catalyzes the synthesis of dTDP-4-amino-4,6-dideoxy-D-galactose (dTDP-Fuc4N) from dTDP-4-keto-6-deoxy-D-glucose (dTDP-D-Glc4O) and L-glutamate. This is dTDP-4-amino-4,6-dideoxygalactose transaminase from Escherichia coli (strain K12).